A 1783-amino-acid chain; its full sequence is Doublecortin domain-containing protein 1 (1783 aa).

Positions 93-133 are disordered; it reads GLQDCSTHQTASDHSHDEISDLDSYKSNSKNNSCSISASKR. Residues 117–131 show a composition bias toward low complexity; the sequence is YKSNSKNNSCSISAS. Positions 168–252 constitute a Doublecortin 1 domain; that stretch reads KLQPRVIKVT…FLNPFKKIKD (85 aa). The region spanning 702 to 800 is the Ricin B-type lectin 1 domain; that stretch reads WLITKTGMIL…HIHHGAWTTA (99 aa). Positions 860–880 are disordered; that stretch reads ASAQRWAIKHEGTSKPGQWKH. The region spanning 925–1015 is the Doublecortin 2 domain; it reads PICKTTEPYA…ELWINPDLSI (91 aa). In terms of domain architecture, Ricin B-type lectin 2 spans 1151-1266; sequence SCSPKHSKLH…GAANQKWHYM (116 aa).

Interacts with dynein intermediate chain, tubulin, RAB8A, RAB3IP, NUDC, PAFAH1B1 and DCTN1.

Its subcellular location is the midbody. The protein resides in the midbody ring. It localises to the cytoplasm. It is found in the cytoskeleton. The protein localises to the spindle. In terms of biological role, microtubule-binding protein which plays an important role in mediating dynein-dependent transport of RAB8A-positive vesicles to the midbody during cytokinesis. This Homo sapiens (Human) protein is Doublecortin domain-containing protein 1.